Consider the following 467-residue polypeptide: MTKVASIVDVLQGKIAIGETVTVRGWIRTRRDSKAGLSFLAIYDGSCFDPIQAIVNNDIENYETEVLRLTTGCSVIVTGTVVESPAEGQAVELQAEKVEVAGWVEDPETYPMAAKRHSIEYLREVAHLRPRTNIIGAVARVRHCLAQAIHRFFHEQGFYWVATPLITASDTEGAGEMFRVSTLDLENLPRDDKGAVDFSQDFFGKESFLTVSGQLNGETYACALSKIYTFGPTFRAENSNTTRHLAEFWMVEPEIAFATLADNAKLAEDMLKYVFRAVLEERKDDLKFFEKHVDNDVISRLENFINSDFAQIDYTDAIEVLLQSGKKFEFPVSWGIDLSSEHERYLAEEHFKSPVVVKNYPKDIKAFYMRLNDDGKTVAAMDVLAPGIGEIIGGSQREERLDVLDKRMIEMGLNPEDYWWYRDLRRYGTVPHAGFGLGFERLIVYVTGVQNIRDVIPFPRSPRNANF.

It belongs to the class-II aminoacyl-tRNA synthetase family. In terms of assembly, homodimer.

The protein localises to the cytoplasm. It carries out the reaction tRNA(Asn) + L-asparagine + ATP = L-asparaginyl-tRNA(Asn) + AMP + diphosphate + H(+). The polypeptide is Asparagine--tRNA ligase (Pasteurella multocida (strain Pm70)).